A 241-amino-acid chain; its full sequence is 3-dehydroquinate dehydratase (241 aa).

Residues 35 to 37 (ELR) and Arg-70 contribute to the 3-dehydroquinate site. Residue His-133 is the Proton donor/acceptor of the active site. Lys-160 (schiff-base intermediate with substrate) is an active-site residue. 3-dehydroquinate-binding residues include Arg-202 and Gln-225.

This sequence belongs to the type-I 3-dehydroquinase family. As to quaternary structure, homodimer.

The enzyme catalyses 3-dehydroquinate = 3-dehydroshikimate + H2O. The protein operates within metabolic intermediate biosynthesis; chorismate biosynthesis; chorismate from D-erythrose 4-phosphate and phosphoenolpyruvate: step 3/7. Its function is as follows. Involved in the third step of the chorismate pathway, which leads to the biosynthesis of aromatic amino acids. Catalyzes the cis-dehydration of 3-dehydroquinate (DHQ) and introduces the first double bond of the aromatic ring to yield 3-dehydroshikimate. This Staphylococcus haemolyticus (strain JCSC1435) protein is 3-dehydroquinate dehydratase.